Consider the following 263-residue polypeptide: Chymotrypsinogen B (263 aa).

Residues 1–18 form the signal peptide; sequence MAFLWLVSCFALVGATFG. Disulfide bonds link Cys19-Cys140, Cys60-Cys76, Cys154-Cys219, Cys186-Cys200, and Cys209-Cys238. The Peptidase S1 domain maps to 34–261; that stretch reads IVNGEDAIPG…LMPWVQQILE (228 aa). His75 (charge relay system) is an active-site residue. The residue at position 93 (Ser93) is a Phosphoserine. Asp120 (charge relay system) is an active-site residue. The active-site Charge relay system is Ser213.

This sequence belongs to the peptidase S1 family.

It localises to the secreted. It is found in the extracellular space. The catalysed reaction is Preferential cleavage: Tyr-|-Xaa, Trp-|-Xaa, Phe-|-Xaa, Leu-|-Xaa.. This chain is Chymotrypsinogen B (Ctrb1), found in Rattus norvegicus (Rat).